A 116-amino-acid chain; its full sequence is SGSCSLKTCWMQLSPFREVGNRLKQKYDQAAAVRLARRRRLEPVNQRFSPPTKMDLVYLETSPDYCMRNDTTGAAGTAGRQCERGSAGTGGCELMCCGRGYDSFRATSTERCHCKF.

S1 carries the O-palmitoleoyl serine; by PORCN lipid modification. An N-linked (GlcNAc...) asparagine glycan is attached at N69. A disulfide bridge links C82 with C97.

Belongs to the Wnt family. In terms of processing, palmitoleoylation is required for efficient binding to frizzled receptors. Depalmitoleoylation leads to Wnt signaling pathway inhibition.

The protein localises to the secreted. It localises to the extracellular space. Its subcellular location is the extracellular matrix. Its function is as follows. Ligand for members of the frizzled family of seven transmembrane receptors. Probable developmental protein. May be a signaling molecule which affects the development of discrete regions of tissues. Is likely to signal over only few cell diameters. The chain is Protein Wnt-5(I) (WNT-5(I)) from Eptatretus stoutii (Pacific hagfish).